A 369-amino-acid chain; its full sequence is MASYRYRAPTRYINADVSVDNLLRTIDSMSRQCRSRNETESELARVRSIITLYRPHLQNRVDLQVAELVLEALMPPNGAQEITHNFNYKYDYNTNSGGGAPPPFFPVGPARPTDAFGAPIAPSEPTPASAPSPPKADAPNPIQQNVYINSAGEAARPSSPRPPPPPASGGGAVALMQVDDADELALKNDYDTLTREYTLVSYKRLVRTLVPVSQKYIINDLFVRGLAKLCSVELLLNNDLGALVDCINREAALNIRPDTPDLCRLLVAMIRGFFILASSATRQEYTLARCDSAALVEEEVWSVKTALDQRMSRLADELETARDKLTQTASRLNRAELELRESRETTLMLKRQVEMNEALRRPARFDDEL.

The segment covering 110-121 (ARPTDAFGAPIA) has biased composition (low complexity). Positions 110–172 (ARPTDAFGAP…PPPPASGGGA (63 aa)) are disordered. Residues 122–136 (PSEPTPASAPSPPKA) show a composition bias toward pro residues.

This is an uncharacterized protein from Lymantria dispar multicapsid nuclear polyhedrosis virus (LdMNPV).